The following is a 478-amino-acid chain: Pyruvate kinase (478 aa).

A substrate-binding site is contributed by arginine 35. K(+) contacts are provided by asparagine 37, serine 39, and aspartate 69. 37 to 40 (NMSH) serves as a coordination point for ATP. 2 residues coordinate ATP: arginine 76 and lysine 157. Glutamate 219 contributes to the Mg(2+) binding site. The substrate site is built by glycine 242, aspartate 243, and threonine 275. Aspartate 243 serves as a coordination point for Mg(2+).

Belongs to the pyruvate kinase family. Homotetramer. Mg(2+) is required as a cofactor. K(+) serves as cofactor.

It catalyses the reaction pyruvate + ATP = phosphoenolpyruvate + ADP + H(+). It participates in carbohydrate degradation; glycolysis; pyruvate from D-glyceraldehyde 3-phosphate: step 5/5. The protein is Pyruvate kinase (pyk) of Methylorubrum extorquens (strain ATCC 14718 / DSM 1338 / JCM 2805 / NCIMB 9133 / AM1) (Methylobacterium extorquens).